Reading from the N-terminus, the 537-residue chain is Immunoglobulin-like domain-containing receptor 1 (537 aa).

Residues 1 to 22 form the signal peptide; it reads MGCGLLAAGLLLFTWLPAGCLS. An Ig-like V-type domain is found at 23–161; that stretch reads LLVTVQHTER…TSGDPDKEVK (139 aa). Residues 23 to 166 lie on the Extracellular side of the membrane; it reads LLVTVQHTER…DKEVKLIVLH (144 aa). A disulfide bond links Cys-44 and Cys-144. Residues 167–187 traverse the membrane as a helical segment; the sequence is WLTVIFIILGALLLLLLIGVC. Over 188–537 the chain is Cytoplasmic; the sequence is WCQCCPQYCC…SSHSGRSVVI (350 aa). The disordered stretch occupies residues 333–537; it reads PPLIRDPPSS…SSHSGRSVVI (205 aa). Residues 341–357 are compositionally biased toward polar residues; the sequence is SSRTSNPSHQQRLNAVS. 2 stretches are compositionally biased toward basic and acidic residues: residues 359-380 and 434-444; these read RHCD…RELQ and RRPEPREGAQR. The segment covering 480-490 has biased composition (basic residues); the sequence is QRRHHHRRRRS. A phosphoserine mark is found at Ser-490 and Ser-492. Positions 518 to 530 are enriched in basic and acidic residues; it reads GNVERRLERESSH.

It belongs to the immunoglobulin superfamily. LISCH7 family. Homooligomer. Interacts with MARVELD2 and OCLN; the interaction is required to recruit MARVELD2 to tricellular contacts. Interacts (via C-terminus) with TRA2A, TRA2B and SRSF1. Interacts with PLSCR1. In terms of tissue distribution, expressed in the vestibule and in hair cells and supporting cells of the cochlea. Expressed in epithelial tissues. Highly expressed in colon but also detected in small intestine, bladder and lung. In colon, expressed in the upper portion of the crypts (at protein level). Expressed in CCK secretory cells of the proximal small intestine (at protein level). Expressed in the organ of Corti, stria vascularis, utricle and saccule of the inner ear.

The protein localises to the cell membrane. The protein resides in the cell junction. It localises to the tight junction. Its subcellular location is the nucleus. It is found in the cytoplasm. Maintains epithelial barrier function by recruiting MARVELD2/tricellulin to tricellular tight junctions (tTJs). Crucial for normal hearing by maintaining the structural and functional integrity of tTJs, which are critical for the survival of auditory neurosensory HCs. Mediates fatty acids and lipoproteins-stimulated CCK/cholecystokinin secretion in the small intestine. In the inner ear, may regulate alternative pre-mRNA splicing via binding to TRA2A, TRA2B and SRSF1. The protein is Immunoglobulin-like domain-containing receptor 1 of Mus musculus (Mouse).